The primary structure comprises 576 residues: WAP, Kazal, immunoglobulin, Kunitz and NTR domain-containing protein 2 (576 aa).

The first 34 residues, 1-34, serve as a signal peptide directing secretion; it reads MWAPRCRRFWSRWEQVAALLLLLLLLGVPPRSLA. The 54-residue stretch at 39 to 92 folds into the WAP domain; the sequence is RYSHAGICPNDMNPNLWVDAQSTCRRECETDQECETYEKCCPNVCGTKSCVAAR. Disulfide bonds link Cys-46–Cys-79, Cys-62–Cys-83, Cys-66–Cys-78, Cys-72–Cys-88, Cys-134–Cys-164, Cys-138–Cys-157, Cys-146–Cys-175, and Cys-231–Cys-287. Residues 126–177 enclose the Kazal-like domain; the sequence is WDGQPVCKCKDRCEKEPSFTCASDGLTYYNRCYMDAEACSKGITLAVVTCRY. The Ig-like C2-type domain occupies 210–303; it reads PALLNNPVHQ…GVLRADFPLS (94 aa). Residue Asn-319 is glycosylated (N-linked (GlcNAc...) asparagine). 9 disulfides stabilise this stretch: Cys-328–Cys-378, Cys-337–Cys-361, Cys-353–Cys-374, Cys-386–Cys-436, Cys-395–Cys-419, Cys-411–Cys-432, Cys-445–Cys-515, Cys-448–Cys-517, and Cys-459–Cys-566. 2 consecutive BPTI/Kunitz inhibitor domains span residues 328-378 and 386-436; these read CLKP…MLAC and CSLP…EESC. The 122-residue stretch at 445-566 folds into the NTR domain; sequence CRACKPRQKL…LREVMHKKTC (122 aa). A glycan (N-linked (GlcNAc...) asparagine) is linked at Asn-519.

This sequence belongs to the WFIKKN family. Interacts with both mature and propeptide myostatin/MSTN. In terms of tissue distribution, primarily expressed in ovary, testis and brain, but not in liver. In fetal tissues, it is primarily expressed in brain, skeletal muscle, thymus and kidney.

It is found in the secreted. In terms of biological role, protease-inhibitor that contains multiple distinct protease inhibitor domains. Probably has serine protease- and metalloprotease-inhibitor activity. Inhibits the biological activity of mature myostatin, but not activin. The chain is WAP, Kazal, immunoglobulin, Kunitz and NTR domain-containing protein 2 (WFIKKN2) from Homo sapiens (Human).